A 443-amino-acid polypeptide reads, in one-letter code: Putative F-box/FBD/LRR-repeat protein At3g49030 (443 aa).

An F-box domain is found at 20-68 (EDRISELPEDLLLQILSDIPTENVIATSVLSKRWRSLWKMVPNLTFDFT). 6 LRR repeats span residues 74-100 (HQTF…QLNF), 152-179 (ILEI…RLYE), 180-205 (VHFK…SVHR), 218-252 (VPSL…NIVG), 272-297 (ISDV…SLES), and 320-345 (KERE…KLTG). The FBD domain occupies 357–408 (NWNPPKCVPECLLFHLEKFLWTGYEWQRGDEKEVATYILENARLLKKATFST).

This Arabidopsis thaliana (Mouse-ear cress) protein is Putative F-box/FBD/LRR-repeat protein At3g49030.